The chain runs to 257 residues: Imidazole glycerol phosphate synthase subunit HisF (257 aa).

Active-site residues include D11 and D130.

This sequence belongs to the HisA/HisF family. Heterodimer of HisH and HisF.

Its subcellular location is the cytoplasm. It catalyses the reaction 5-[(5-phospho-1-deoxy-D-ribulos-1-ylimino)methylamino]-1-(5-phospho-beta-D-ribosyl)imidazole-4-carboxamide + L-glutamine = D-erythro-1-(imidazol-4-yl)glycerol 3-phosphate + 5-amino-1-(5-phospho-beta-D-ribosyl)imidazole-4-carboxamide + L-glutamate + H(+). The protein operates within amino-acid biosynthesis; L-histidine biosynthesis; L-histidine from 5-phospho-alpha-D-ribose 1-diphosphate: step 5/9. Its function is as follows. IGPS catalyzes the conversion of PRFAR and glutamine to IGP, AICAR and glutamate. The HisF subunit catalyzes the cyclization activity that produces IGP and AICAR from PRFAR using the ammonia provided by the HisH subunit. This chain is Imidazole glycerol phosphate synthase subunit HisF, found in Shewanella sediminis (strain HAW-EB3).